The primary structure comprises 132 residues: Small ribosomal subunit protein uS8 (132 aa).

It belongs to the universal ribosomal protein uS8 family. Part of the 30S ribosomal subunit. Contacts proteins S5 and S12.

Its function is as follows. One of the primary rRNA binding proteins, it binds directly to 16S rRNA central domain where it helps coordinate assembly of the platform of the 30S subunit. This is Small ribosomal subunit protein uS8 from Corynebacterium diphtheriae (strain ATCC 700971 / NCTC 13129 / Biotype gravis).